A 261-amino-acid polypeptide reads, in one-letter code: Pantothenate synthetase (261 aa).

ATP is bound at residue 29-36; the sequence is MGALHNGH. Residue His36 is the Proton donor of the active site. Gln60 lines the (R)-pantoate pocket. A beta-alanine-binding site is contributed by Gln60. 147–150 lines the ATP pocket; that stretch reads GEKD. Position 153 (Gln153) interacts with (R)-pantoate. 184–187 is a binding site for ATP; it reads LSSR.

Belongs to the pantothenate synthetase family. In terms of assembly, homodimer.

The protein resides in the cytoplasm. The catalysed reaction is (R)-pantoate + beta-alanine + ATP = (R)-pantothenate + AMP + diphosphate + H(+). Its pathway is cofactor biosynthesis; (R)-pantothenate biosynthesis; (R)-pantothenate from (R)-pantoate and beta-alanine: step 1/1. Its function is as follows. Catalyzes the condensation of pantoate with beta-alanine in an ATP-dependent reaction via a pantoyl-adenylate intermediate. The polypeptide is Pantothenate synthetase (Francisella tularensis subsp. novicida (strain U112)).